A 272-amino-acid chain; its full sequence is MANYTAADVKKLREITGAGMMDCKKALEEAAGDFDKAIEILRIKGAKDVGKRAERSASEGLIAVSGNTMIEVNAETDFVAKNSEFIEFADKVAAAAAEAKANSREELEAVEVDGQKAVDALQQLSAKIGEKLELKRATTIEGDKVAVYMHHRSADLPPAVGVLVAYEGDDEGAAKAAAMQVAALKAKYLSSDEVPAETVAKEREIAEATAREEGKPEKALPNIIEGRLKGYFKDVCLLDQPSVTESKKSVKQVMDEAGVTLKGFKRFEVGQA.

The tract at residues 76-79 (TDFV) is involved in Mg(2+) ion dislocation from EF-Tu.

Belongs to the EF-Ts family.

The protein localises to the cytoplasm. In terms of biological role, associates with the EF-Tu.GDP complex and induces the exchange of GDP to GTP. It remains bound to the aminoacyl-tRNA.EF-Tu.GTP complex up to the GTP hydrolysis stage on the ribosome. The sequence is that of Elongation factor Ts from Corynebacterium jeikeium (strain K411).